The chain runs to 178 residues: Large ribosomal subunit protein uL13m (178 aa).

Position 2 is an N-acetylserine (Ser2).

Belongs to the universal ribosomal protein uL13 family. Component of the mitochondrial large ribosomal subunit (mt-LSU). Mature mammalian 55S mitochondrial ribosomes consist of a small (28S) and a large (39S) subunit. The 28S small subunit contains a 12S ribosomal RNA (12S mt-rRNA) and 30 different proteins. The 39S large subunit contains a 16S rRNA (16S mt-rRNA), a copy of mitochondrial valine transfer RNA (mt-tRNA(Val)), which plays an integral structural role, and 52 different proteins. Interacts with OXA1L.

It is found in the mitochondrion. The sequence is that of Large ribosomal subunit protein uL13m (MRPL13) from Homo sapiens (Human).